A 380-amino-acid chain; its full sequence is S-adenosylmethionine:tRNA ribosyltransferase-isomerase (380 aa).

The span at 1–15 (MHSKHPTDTARRCET) shows a compositional bias: basic and acidic residues. Residues 1–24 (MHSKHPTDTARRCETGTDSSDTAA) form a disordered region.

Belongs to the QueA family. As to quaternary structure, monomer.

It localises to the cytoplasm. The catalysed reaction is 7-aminomethyl-7-carbaguanosine(34) in tRNA + S-adenosyl-L-methionine = epoxyqueuosine(34) in tRNA + adenine + L-methionine + 2 H(+). The protein operates within tRNA modification; tRNA-queuosine biosynthesis. Functionally, transfers and isomerizes the ribose moiety from AdoMet to the 7-aminomethyl group of 7-deazaguanine (preQ1-tRNA) to give epoxyqueuosine (oQ-tRNA). The polypeptide is S-adenosylmethionine:tRNA ribosyltransferase-isomerase (Oleidesulfovibrio alaskensis (strain ATCC BAA-1058 / DSM 17464 / G20) (Desulfovibrio alaskensis)).